Consider the following 406-residue polypeptide: Dihydroorotase, mitochondrial (406 aa).

The N-terminal 41 residues, methionine 1 to lysine 41, are a transit peptide targeting the mitochondrion. 6 residues coordinate Zn(2+): histidine 69, histidine 71, lysine 155, histidine 193, histidine 231, and aspartate 305. Lysine 155 is subject to N6-carboxylysine.

The protein belongs to the metallo-dependent hydrolases superfamily. DHOase family. Class II DHOase subfamily. Requires Zn(2+) as cofactor.

It localises to the mitochondrion. It catalyses the reaction (S)-dihydroorotate + H2O = N-carbamoyl-L-aspartate + H(+). It participates in pyrimidine metabolism; UMP biosynthesis via de novo pathway; (S)-dihydroorotate from bicarbonate: step 3/3. The sequence is that of Dihydroorotase, mitochondrial (PYRC) from Oryza sativa subsp. japonica (Rice).